Reading from the N-terminus, the 398-residue chain is Metallophosphoesterase 1 (398 aa).

Residues 25-45 form a helical membrane-spanning segment; that stretch reads VCFVSSVLIFCEFFIYYLVIF. The a divalent metal cation site is built by Asp-75, Asp-117, Asn-155, His-251, His-305, and His-307. The helical transmembrane segment at 359–379 threads the bilayer; that stretch reads VFAIYWAAGALLVVLVLAHFQ. Positions 394–398 match the Di-lysine motif motif; it reads KHKAA.

This sequence belongs to the metallophosphoesterase superfamily. MPPE1 family. The cofactor is Mn(2+).

It is found in the endoplasmic reticulum-Golgi intermediate compartment membrane. Its function is as follows. Metallophosphoesterase that catalyzes the removal of a side-chain ethanolamine-phosphate (EtNP) from the second mannose of the GPI-anchor protein intermediate. Participates in the glycan remodeling steps of GPI-anchor maturation to allow an efficient transport of GPI-anchor proteins from the endoplasmic reticulum to the Golgi. In Gallus gallus (Chicken), this protein is Metallophosphoesterase 1.